The chain runs to 421 residues: UPF0415 protein C7orf25 homolog (421 aa).

The protein belongs to the UPF0415 family.

The sequence is that of UPF0415 protein C7orf25 homolog from Bos taurus (Bovine).